The following is a 252-amino-acid chain: 3-dehydroquinate dehydratase (252 aa).

Residues serine 21, 46–48, and arginine 82 each bind 3-dehydroquinate; that span reads EWR. Residue histidine 143 is the Proton donor/acceptor of the active site. The active-site Schiff-base intermediate with substrate is the lysine 170. Residues arginine 213, serine 232, and glutamine 236 each coordinate 3-dehydroquinate.

It belongs to the type-I 3-dehydroquinase family. As to quaternary structure, homodimer.

It carries out the reaction 3-dehydroquinate = 3-dehydroshikimate + H2O. It participates in metabolic intermediate biosynthesis; chorismate biosynthesis; chorismate from D-erythrose 4-phosphate and phosphoenolpyruvate: step 3/7. Functionally, involved in the third step of the chorismate pathway, which leads to the biosynthesis of aromatic amino acids. Catalyzes the cis-dehydration of 3-dehydroquinate (DHQ) and introduces the first double bond of the aromatic ring to yield 3-dehydroshikimate. This Shigella boydii serotype 4 (strain Sb227) protein is 3-dehydroquinate dehydratase.